The primary structure comprises 1104 residues: Protein KIBRA (1104 aa).

WW domains follow at residues 6–39 (LPLPEGWEEARDFDGKVYYIDHRNRTTSWIDPRD) and 53–86 (DELPLGWEEAYDPQVGDYFIDHNTKTTQIEDPRV). A coiled-coil region spans residues 107 to 193 (LSAQKEIYQV…ELQFKERGFQ (87 aa)). Residue S141 is modified to Phosphoserine. 2 disordered regions span residues 429 to 449 (SMQSLSSGSSPGSLTSSRGSL) and 509 to 547 (TQKAEGGSRLQALRSLSGTPRSMTSLSPRSSLSSPSPPC). Residues 527-542 (TPRSMTSLSPRSSLSS) show a composition bias toward low complexity. S535 bears the Phosphoserine mark. S542 carries the post-translational modification Phosphoserine; by CDK1. A C2 domain is found at 659-782 (GATRVQIALK…RSGERSTRWY (124 aa)). A disordered region spans residues 822 to 949 (LEKRQEGRSS…DSSTLSKKPP (128 aa)). The interaction with histone H3 stretch occupies residues 836–1104 (EGSWTYEEEA…NIPALSADDV (269 aa)). Positions 841–862 (YEEEASENEAVAEEEEEGEEDV) are enriched in acidic residues. Phosphoserine is present on residues S887, S891, and S919. Over residues 916–930 (IIRSKTFSPGPQSQY) the composition is skewed to polar residues. The residue at position 921 (T921) is a Phosphothreonine. S923 bears the Phosphoserine; by CDK1 mark. Position 939 is a phosphoserine (S939). Interaction with PRKCZ regions lie at residues 945-988 (SKKP…LDLQ) and 948-967 (PPFVRNSLERRSVRMKRPSS). Phosphoserine; by PKC/PRKCZ occurs at positions 967 and 970. A coiled-coil region spans residues 994-1024 (HSQLTQEISVLKELKEHLEQAKNHGEKELPQ). An ADDV motif motif is present at residues 1102-1104 (DDV).

The protein belongs to the WWC family. KIBRA subfamily. As to quaternary structure, homodimer. Forms heterodimers with WWC2 and WWC3. Interacts with DDN. Interacts with DYNLL1 and histone H3. The interaction with DYNLL1 is mandatory for the recruitment and transactivation functions of ESR1 or DYNLL1 to the target chromatin and the interaction with histone H3 ensures proper regulatory interaction of WWC1-DYNLL1-ESR1 complexes with target chromatin. Interacts (via WW domains) with DDR1 (via PPxY motif) in a collagen-regulated manner. Interacts with PRKCZ (via the protein kinase domain). Forms a tripartite complex with DDR1 and PRKCZ, but predominantly in the absence of collagen. Interacts (via the ADDV motif) with PATJ (via PDZ domain 8). Interacts (via WW domains) with SYNPO (via PPxY motifs). Interacts with NF2 and SNX4. Interacts with CCDC141; retains AMPAR in the cytosol after internalization. Interacts with DLC1 and PRKCZ. Interacts (via WW domains) with LATS1 and LATS2. In terms of processing, phosphorylation at Ser-542 and Ser-923 by CDK1 in response to spindle damage stress regulates mitotic exit, these two sites are dephosphorylated by CDC14B. Mammary epithelium.

The protein localises to the cytoplasm. It is found in the perinuclear region. It localises to the nucleus. The protein resides in the cell projection. Its subcellular location is the ruffle membrane. The protein localises to the cytosol. In terms of biological role, regulator of the Hippo signaling pathway, also known as the Salvador-Warts-Hippo (SWH) pathway. Enhances phosphorylation of LATS1 and YAP1 and negatively regulates cell proliferation and organ growth due to a suppression of the transcriptional activity of YAP1, the major effector of the Hippo pathway. Along with NF2 can synergistically induce the phosphorylation of LATS1 and LATS2 and function in the regulation of Hippo signaling pathway. Acts as a transcriptional coactivator of ESR1 which plays an essential role in DYNLL1-mediated ESR1 transactivation. Modulates directional migration of podocytes. May be associated with memory performance. Regulates collagen-stimulated activation of the ERK/MAPK cascade. Plays an important role in regulating AMPA-selective glutamate receptors (AMPARs) trafficking. The chain is Protein KIBRA (Wwc1) from Mus musculus (Mouse).